Consider the following 164-residue polypeptide: Large ribosomal subunit protein uL10 (164 aa).

This sequence belongs to the universal ribosomal protein uL10 family. As to quaternary structure, part of the ribosomal stalk of the 50S ribosomal subunit. The N-terminus interacts with L11 and the large rRNA to form the base of the stalk. The C-terminus forms an elongated spine to which L12 dimers bind in a sequential fashion forming a multimeric L10(L12)X complex.

In terms of biological role, forms part of the ribosomal stalk, playing a central role in the interaction of the ribosome with GTP-bound translation factors. This is Large ribosomal subunit protein uL10 from Helicobacter pylori (strain P12).